Reading from the N-terminus, the 432-residue chain is Calcium uptake protein 2, mitochondrial (432 aa).

The transit peptide at 1–22 (MAAAAGRSAWLAAWGGRLRRGL) directs the protein to the mitochondrion. The EF-hand 1 domain maps to 169-204 (KPHSGFHVAFKMLDVDGNEMIERKEFVKLQKIISKQ). 6 residues coordinate Ca(2+): Asp-182, Asp-184, Asn-186, Met-188, Glu-190, and Glu-193. Phosphoserine is present on Ser-202. The 36-residue stretch at 224–259 (EPGVNTTLQVRFFGKRGEKKLHYKEFRRFMENLQTE) folds into the EF-hand 2; degenerate domain. The region spanning 290-325 (TENKDIYWRNVREKLSVGESISLDEFKSFCHFTTHL) is the EF-hand 3; degenerate domain. One can recognise an EF-hand 4 domain in the interval 359–394 (LSDNLLDTVFKIFDLDGDECLSHGEFLGVLKNRMHR). Residues Asp-372, Asp-374, Asp-376, Cys-378, and Glu-383 each contribute to the Ca(2+) site.

The protein belongs to the MICU1 family. MICU2 subfamily. As to quaternary structure, heterodimer; disulfide-linked; heterodimerizes with MICU1. Component of the uniplex complex, composed of MCU, EMRE/SMDT1, MICU1 and MICU2 in a 4:4:1:1 stoichiometry. In terms of tissue distribution, predominantly expressed in stomach, intestine, skeletal muscle, kidney, heart, testis, prostate and uterus.

It localises to the mitochondrion intermembrane space. It is found in the mitochondrion inner membrane. In terms of biological role, calcium sensor of the mitochondrial calcium uniporter (MCU) channel, which senses calcium level via its EF-hand domains. MICU1 and MICU2 form a disulfide-linked heterodimer that stimulates and inhibits MCU activity, depending on the concentration of calcium. At low calcium levels, MICU1 occludes the pore of the MCU channel, preventing mitochondrial calcium uptake. At higher calcium levels, calcium-binding to MICU1 and MICU2 induces a conformational change that weakens MCU-MICU1 interactions and moves the MICU1-MICU2 heterodimer away from the pore, allowing calcium permeation through the MCU channel. The sequence is that of Calcium uptake protein 2, mitochondrial from Mus musculus (Mouse).